Here is a 371-residue protein sequence, read N- to C-terminus: MPNQHTLLLFNLLPVGSNISTWWNFGSMLLTCSALQVMTGFFLAIHYTANINLAFSSIVHITRDVPYGWIMQNLHAIGASMFFICIYIHIARGLYYGSYLNKNVWLSGTTLLIILMATAFFGYVLPWGQMSFWAATVITNLLTAVPYIGTALTTWLWGGFSINDPTLTRFFALHFILPFAIISMSSIHIMLLHTEGSSNPLGTNSDIDKIPFHPYHSHKDILMLTIMITTMFTIMSFSPDIFNDPENFSKANPLVTPQHIKPEWYFLFAYGILRSIPNKLGGTVALVLSVAILMTMPFTHTSYIRSMAFRPIMQLVFWTLIATFITITWAATKPVEPPFTIIGQTTSFLYFSFFIMNPLVGWLENKISFHS.

4 helical membrane passes run 25–45 (FGSM…FLAI), 69–90 (WIMQ…YIHI), 105–125 (WLSG…GYVL), and 170–190 (FFAL…IHIM). Positions 75 and 89 each coordinate heme b. Heme b contacts are provided by H174 and H188. Position 193 (H193) interacts with a ubiquinone. The next 4 helical transmembrane spans lie at 218–238 (HKDI…MSFS), 280–300 (LGGT…PFTH), 312–332 (IMQL…WAAT), and 339–358 (FTII…IMNP).

The protein belongs to the cytochrome b family. In terms of assembly, the cytochrome bc1 complex contains 3 respiratory subunits (MT-CYB, CYC1 and UQCRFS1), 2 core proteins (UQCRC1 and UQCRC2) and probably 6 low-molecular weight proteins. Requires heme b as cofactor.

It is found in the mitochondrion inner membrane. Functionally, component of the ubiquinol-cytochrome c reductase complex (complex III or cytochrome b-c1 complex) that is part of the mitochondrial respiratory chain. The b-c1 complex mediates electron transfer from ubiquinol to cytochrome c. Contributes to the generation of a proton gradient across the mitochondrial membrane that is then used for ATP synthesis. This Coluber constrictor (Eastern racer) protein is Cytochrome b (MT-CYB).